The following is a 425-amino-acid chain: Fe(2+) transport protein 3, chloroplastic (425 aa).

A helical transmembrane segment spans residues 65-85 (FVAIASILLAGAAGVTIPLIG). Topologically, residues 86 to 97 (RNRRFLQTDGNL) are cytoplasmic. A helical transmembrane segment spans residues 98 to 118 (FVTAKAFAAGVILATGFVHML). Over 119-137 (AGGTEALKNPCLPDFPWSK) the chain is Lumenal. A helical transmembrane segment spans residues 138–158 (FPFPGFFAMIAALITLFVDFM). The Cytoplasmic segment spans residues 159 to 269 (GTQYYERKQE…GLDAVNGARH (111 aa)). The chain crosses the membrane as a helical span at residues 270 to 290 (IVVSQVLELGIVSHSIIIGLS). The Lumenal portion of the chain corresponds to 291 to 301 (LGVSQSPCTIR). A helical membrane pass occupies residues 302 to 322 (PLIAALSFHQFFEGFALGGCI). Over 323–333 (SQAQFRNKSAT) the chain is Cytoplasmic. Residues 334-354 (IMACFFALTTPIGIGIGTAVA) traverse the membrane as a helical segment. Topologically, residues 355 to 369 (SSFNSHSVGALVTEG) are lumenal. The chain crosses the membrane as a helical span at residues 370-390 (ILDSLSAGILVYMALVDLIAA). The Cytoplasmic portion of the chain corresponds to 391-404 (DFLSTKMRCNFRLQ). The chain crosses the membrane as a helical span at residues 405-425 (IVSYVMLFLGAGLMSSLAIWA).

Belongs to the ZIP transporter (TC 2.A.5) family.

The protein resides in the plastid. It is found in the chloroplast thylakoid membrane. In terms of biological role, may play a role in the transport of iron in the plastids. This chain is Fe(2+) transport protein 3, chloroplastic (IRT3), found in Arabidopsis thaliana (Mouse-ear cress).